The chain runs to 214 residues: Adenylate kinase (214 aa).

Residue 10-15 participates in ATP binding; sequence GAGKGT. The NMP stretch occupies residues 30–59; the sequence is STGDMLRAAVKAQTPVGLKAKAVMDRGELV. AMP contacts are provided by residues threonine 31, arginine 36, 57–59, 85–88, and glutamine 92; these read ELV and GYPR. An LID region spans residues 126-163; sequence GRFTCAKCGTGYHDRHKQPAREGVCDVCGSTEFKRRPD. Arginine 127 lines the ATP pocket. Zn(2+)-binding residues include cysteine 130, cysteine 133, cysteine 150, and cysteine 153. AMP is bound by residues arginine 160 and arginine 172. Glycine 200 is a binding site for ATP.

It belongs to the adenylate kinase family. As to quaternary structure, monomer.

It is found in the cytoplasm. It catalyses the reaction AMP + ATP = 2 ADP. It participates in purine metabolism; AMP biosynthesis via salvage pathway; AMP from ADP: step 1/1. In terms of biological role, catalyzes the reversible transfer of the terminal phosphate group between ATP and AMP. Plays an important role in cellular energy homeostasis and in adenine nucleotide metabolism. The protein is Adenylate kinase of Erythrobacter litoralis (strain HTCC2594).